An 87-amino-acid polypeptide reads, in one-letter code: uncharacterized protein (87 aa).

This is an uncharacterized protein from Autographa californica nuclear polyhedrosis virus (AcMNPV).